The sequence spans 21 residues: Cupiennin-6c (21 aa).

Ser-21 bears the Serine amide mark.

As to expression, expressed by the venom gland.

It is found in the secreted. The sequence is that of Cupiennin-6c from Cupiennius salei (American wandering spider).